Here is a 137-residue protein sequence, read N- to C-terminus: Large ribosomal subunit protein uL11 (137 aa).

Belongs to the universal ribosomal protein uL11 family. In terms of assembly, part of the ribosomal stalk of the 50S ribosomal subunit. Interacts with L10 and the large rRNA to form the base of the stalk. L10 forms an elongated spine to which L12 dimers bind in a sequential fashion forming a multimeric L10(L12)X complex. One or more lysine residues are methylated.

Functionally, forms part of the ribosomal stalk which helps the ribosome interact with GTP-bound translation factors. The protein is Large ribosomal subunit protein uL11 of Mycoplasma pneumoniae (strain ATCC 29342 / M129 / Subtype 1) (Mycoplasmoides pneumoniae).